The chain runs to 369 residues: MILKRISILNYKNLEQVEIGFSAKLNCFFGQNGMGKTNLLDAVYFLSFCKSSGNPIDSQNIRHEQDFFVIQGFYEAEDGTPEEIYCGMKRRSKKQFKRNKKEYSRFSDHIGFLPLVMVSPADSELIAGGSDERRRFMDVVISQYDKEYLEALIRYNKALAQRNTLLKSEFPVEEELFLVWEEMMAQAGEIVFRKREAFIEEFIPIFQSFYSFISQDKEQVGLSYDSHARDASLLEVLKQSRERDKIMGFSLRGIHKDELNMLLGDFPIKKEGSQGQNKTYLVALKLAQFDFLKRTGQTVPLLLLDDIFDKLDASRVEQIVKLVAGDNFGQIFITDTNREHLDRILQKVGSDYKVFRVDQGVINEMGAEQ.

30-37 (GQNGMGKT) lines the ATP pocket.

This sequence belongs to the RecF family.

The protein localises to the cytoplasm. Functionally, the RecF protein is involved in DNA metabolism; it is required for DNA replication and normal SOS inducibility. RecF binds preferentially to single-stranded, linear DNA. It also seems to bind ATP. The protein is DNA replication and repair protein RecF of Bacteroides thetaiotaomicron (strain ATCC 29148 / DSM 2079 / JCM 5827 / CCUG 10774 / NCTC 10582 / VPI-5482 / E50).